A 1103-amino-acid chain; its full sequence is Kinesin-like protein KIF1C (1103 aa).

Residues 5–348 (SVKVAVRVRP…LRYADRTKQI (344 aa)) form the Kinesin motor domain. 97 to 104 (GQTGAGKS) serves as a coordination point for ATP. Residue Ser295 is modified to Phosphoserine. Coiled coils occupy residues 359 to 388 (NARLIRELQEEVARLRELLMAQGLSASALE) and 438 to 479 (EEAM…LAEM). Residues 400–438 (ALPAVSSPPAPVSPSSPTTHNGELEPSFSPNTESQIGPE) are disordered. Ser494 is subject to Phosphoserine. One can recognise an FHA domain in the interval 523–590 (TRVGQVDMDI…LKSGNRIVMG (68 aa)). The stretch at 633 to 674 (EQQGIDIKLEMEKRLQDLENQYRKEKEEADLLLEQQRLYADS) forms a coiled coil. Residues Ser674 and Ser676 each carry the phosphoserine modification. 3 disordered regions span residues 808 to 828 (GEEEGGGAGSGGGSEEGARGA), 874 to 924 (LAQD…WERV), and 950 to 1103 (QGLQ…GAAV). Residues 813–822 (GGAGSGGGSE) are compositionally biased toward gly residues. Residues 828-872 (AEVEDLRAHIDKLTGILQEVKLQNSSKDRELQALRDRMLRMERVI) adopt a coiled-coil conformation. Low complexity predominate over residues 893–910 (PEGSEAAEEAAPSDRMPS). The residue at position 915 (Ser915) is a Phosphoserine. Residues 953–962 (QGSGGRGGGL) are compositionally biased toward gly residues. A compositionally biased stretch (basic residues) spans 1021 to 1031 (PSPRRSHHPRR). Ser1033 is modified (phosphoserine). Arg1041 carries the omega-N-methylarginine modification. Positions 1062–1083 (PQPPQPYPAQRPPGPRYPPYTT) are enriched in pro residues. Residue Thr1083 is modified to Phosphothreonine. At Ser1092 the chain carries Phosphoserine. A compositionally biased stretch (basic and acidic residues) spans 1092 to 1103 (SAPDLKESGAAV).

It belongs to the TRAFAC class myosin-kinesin ATPase superfamily. Kinesin family. Unc-104 subfamily. Monomer. Interacts with BICD2. In terms of processing, phosphorylated on tyrosine residues. As to expression, expressed in all tissues examined, with most abundant expression in heart and skeletal muscle.

Its subcellular location is the cytoplasm. It is found in the cytoskeleton. Motor required for the retrograde transport of Golgi vesicles to the endoplasmic reticulum. Has a microtubule plus end-directed motility. The polypeptide is Kinesin-like protein KIF1C (KIF1C) (Homo sapiens (Human)).